Consider the following 255-residue polypeptide: Shieldin complex subunit 3 (255 aa).

A sufficient for interaction with MAD2L2 region spans residues 33-88; sequence QDFPTHPLPRFIPWFPYDESKLPLKPERLPPVISEEAAESVKQYLAISEPGVKSQS. The segment at 116 to 135 is disordered; sequence QTNAAHLDKNSGKEKQHKQR.

In terms of assembly, component of the shieldin complex, consisting of SHLD1, SHLD2, SHLD3 and MAD2L2/REV7. Within the complex, SHLD2 forms a scaffold which interacts with a SHLD3-MAD2L2 subcomplex via its N-terminus, and with SHLD1 via its C-terminus. Interacts with ASTE1.

It localises to the chromosome. Functionally, component of the shieldin complex, which plays an important role in repair of DNA double-stranded breaks (DSBs). During G1 and S phase of the cell cycle, the complex functions downstream of TP53BP1 to promote non-homologous end joining (NHEJ) and suppress DNA end resection. Mediates various NHEJ-dependent processes including immunoglobulin class-switch recombination, and fusion of unprotected telomeres. The chain is Shieldin complex subunit 3 from Mus musculus (Mouse).